Reading from the N-terminus, the 202-residue chain is 3-isopropylmalate dehydratase small subunit (202 aa).

This sequence belongs to the LeuD family. LeuD type 1 subfamily. As to quaternary structure, heterodimer of LeuC and LeuD.

It catalyses the reaction (2R,3S)-3-isopropylmalate = (2S)-2-isopropylmalate. Its pathway is amino-acid biosynthesis; L-leucine biosynthesis; L-leucine from 3-methyl-2-oxobutanoate: step 2/4. Functionally, catalyzes the isomerization between 2-isopropylmalate and 3-isopropylmalate, via the formation of 2-isopropylmaleate. The chain is 3-isopropylmalate dehydratase small subunit from Blochmanniella pennsylvanica (strain BPEN).